The sequence spans 147 residues: Hemoglobin subunit beta (147 aa).

The region spanning 3-147 is the Globin domain; sequence EWTDKERTII…VVSALGKQYH (145 aa). Heme b is bound by residues His64 and His93.

It belongs to the globin family. As to quaternary structure, heterotetramer of two alpha chains and two beta chains. As to expression, red blood cells.

Functionally, involved in oxygen transport from gills to the various peripheral tissues. The polypeptide is Hemoglobin subunit beta (Trematomus newnesi (Dusky notothen)).